Here is a 1345-residue protein sequence, read N- to C-terminus: DNA-directed RNA polymerase subunit beta (1345 aa).

It belongs to the RNA polymerase beta chain family. In terms of assembly, the RNAP catalytic core consists of 2 alpha, 1 beta, 1 beta' and 1 omega subunit. When a sigma factor is associated with the core the holoenzyme is formed, which can initiate transcription.

The catalysed reaction is RNA(n) + a ribonucleoside 5'-triphosphate = RNA(n+1) + diphosphate. DNA-dependent RNA polymerase catalyzes the transcription of DNA into RNA using the four ribonucleoside triphosphates as substrates. In Shewanella oneidensis (strain ATCC 700550 / JCM 31522 / CIP 106686 / LMG 19005 / NCIMB 14063 / MR-1), this protein is DNA-directed RNA polymerase subunit beta.